We begin with the raw amino-acid sequence, 289 residues long: 26S proteasome non-ATPase regulatory subunit 8 (289 aa).

The residue at position 45 (Ser-45) is a Phosphoserine. In terms of domain architecture, PCI spans 101 to 270 (PSFERYMAQL…QQKPEDTTIP (170 aa)). Residue Lys-236 forms a Glycyl lysine isopeptide (Lys-Gly) (interchain with G-Cter in SUMO2) linkage.

It belongs to the proteasome subunit S14 family. Component of the 19S proteasome regulatory particle complex. The 26S proteasome consists of a 20S core particle (CP) and two 19S regulatory subunits (RP). The regulatory particle is made of a lid composed of 9 subunits including PSMD8, a base containing 6 ATPases and few additional components. Interacts with DDI2. Interacts with TASOR.

Its function is as follows. Component of the 26S proteasome, a multiprotein complex involved in the ATP-dependent degradation of ubiquitinated proteins. This complex plays a key role in the maintenance of protein homeostasis by removing misfolded or damaged proteins, which could impair cellular functions, and by removing proteins whose functions are no longer required. Therefore, the proteasome participates in numerous cellular processes, including cell cycle progression, apoptosis, or DNA damage repair. The sequence is that of 26S proteasome non-ATPase regulatory subunit 8 (PSMD8) from Pongo abelii (Sumatran orangutan).